The primary structure comprises 156 residues: Small ribosomal subunit protein uS7 (156 aa).

The protein belongs to the universal ribosomal protein uS7 family. In terms of assembly, part of the 30S ribosomal subunit. Contacts proteins S9 and S11.

In terms of biological role, one of the primary rRNA binding proteins, it binds directly to 16S rRNA where it nucleates assembly of the head domain of the 30S subunit. Is located at the subunit interface close to the decoding center, probably blocks exit of the E-site tRNA. This is Small ribosomal subunit protein uS7 from Paramagnetospirillum magneticum (strain ATCC 700264 / AMB-1) (Magnetospirillum magneticum).